The sequence spans 919 residues: Plasma membrane ATPase 1 (919 aa).

Residues 1–16 are compositionally biased toward basic and acidic residues; that stretch reads MADNAGEYHDAEKHAP. Residues 1–73 are disordered; it reads MADNAGEYHD…APAAGEAKAV (73 aa). The Cytoplasmic segment spans residues 1–113; sequence MADNAGEYHD…KEELENPFLK (113 aa). Positions 34-63 are enriched in acidic residues; the sequence is QDDEPDDDIDALIEELFSEDVQEEQEDNDD. At S89 the chain carries Phosphoserine. The chain crosses the membrane as a helical span at residues 114–134; sequence FIMFFVGPIQFVMEMAAALAA. The Extracellular portion of the chain corresponds to 135-138; that stretch reads GLRD. The chain crosses the membrane as a helical span at residues 139 to 158; sequence WVDFGVICALLMLNAVVGFV. The Cytoplasmic portion of the chain corresponds to 159–289; the sequence is QEYQAGSIVD…GTGHFTEVLN (131 aa). A helical membrane pass occupies residues 290 to 311; that stretch reads GIGTILLVLVLLTLFCIYTAAF. Residues 312 to 322 are Extracellular-facing; the sequence is YRSVRLARLLE. A helical transmembrane segment spans residues 323–345; it reads YTLAITIIGVPVGLPAVVTTTMA. Over 346–717 the chain is Cytoplasmic; it reads VGAAYLAEKQ…LIIRNQLLNL (372 aa). The active-site 4-aspartylphosphate intermediate is the D376. S494 carries the phosphoserine modification. Mg(2+) contacts are provided by D632 and D636. The helical transmembrane segment at 718 to 736 threads the bilayer; sequence ELVVFIAIFADVATLAIAY. Topologically, residues 737–752 are extracellular; the sequence is DNAPYSMKPVKWNLPR. A helical transmembrane segment spans residues 753 to 772; that stretch reads LWGLSTVIGIVLAIGTWITN. Residues 773–824 are Cytoplasmic-facing; that stretch reads TTMIAQGQNRGIVQNFGVQDEVLFLEISLTENWLIFVTRCNGPFWSSIPSWQ. A helical membrane pass occupies residues 825–845; sequence LSGAVLAVDILATMFCIFGWF. Residues 846–858 lie on the Extracellular side of the membrane; sequence KGGHQTSIVAVLR. Residues 859–875 form a helical membrane-spanning segment; sequence IWMYSFGIFCIMAGTYY. Residues 876-919 lie on the Cytoplasmic side of the membrane; it reads ILSESAGFDRMMNGKPKESRNQRSIEDLVVALQRTSTRHEKGDA. Residue S899 is modified to Phosphoserine.

It belongs to the cation transport ATPase (P-type) (TC 3.A.3) family. Type IIIA subfamily.

The protein localises to the cell membrane. It carries out the reaction ATP + H2O + H(+)(in) = ADP + phosphate + 2 H(+)(out). Its function is as follows. The plasma membrane ATPase of plants and fungi is a hydrogen ion pump. The proton gradient it generates drives the active transport of nutrients by H(+)-symport. The resulting external acidification and/or internal alkinization may mediate growth responses. This chain is Plasma membrane ATPase 1 (pma1), found in Schizosaccharomyces pombe (strain 972 / ATCC 24843) (Fission yeast).